The sequence spans 523 residues: Probable E3 ubiquitin-protein ligase ZFP1 (523 aa).

The span at 18–28 (EQGHSHIHSES) shows a compositional bias: basic and acidic residues. Residues 18 to 43 (EQGHSHIHSESFNRTGNDSSDQGAQH) form a disordered region. Over residues 29–40 (FNRTGNDSSDQG) the composition is skewed to polar residues. The segment at 471–512 (CIICQEEYQVKECIGTLDCGHRYHEDCIKQWLMVKNLCPICK) adopts an RING-type; atypical zinc-finger fold.

It belongs to the RING-type zinc finger family. In terms of assembly, interacts with DJA6.

The enzyme catalyses S-ubiquitinyl-[E2 ubiquitin-conjugating enzyme]-L-cysteine + [acceptor protein]-L-lysine = [E2 ubiquitin-conjugating enzyme]-L-cysteine + N(6)-ubiquitinyl-[acceptor protein]-L-lysine.. Its pathway is protein modification; protein ubiquitination. Functionally, probable E3 ubiquitin-protein ligase. The polypeptide is Probable E3 ubiquitin-protein ligase ZFP1 (Oryza sativa subsp. japonica (Rice)).